The following is a 651-amino-acid chain: Mediator of RNA polymerase II transcription subunit 17 (651 aa).

Positions 51–83 are disordered; the sequence is QGSGSEEEEAAGTEGDAQEWPGAGSSADQDDEE.

It belongs to the Mediator complex subunit 17 family. Interacts with GATA1 and PPARG. Component of the Mediator complex, which is composed of MED1, MED4, MED6, MED7, MED8, MED9, MED10, MED11, MED12, MED13, MED13L, MED14, MED15, MED16, MED17, MED18, MED19, MED20, MED21, MED22, MED23, MED24, MED25, MED26, MED27, MED29, MED30, MED31, CCNC, CDK8 and CDC2L6/CDK11. The MED12, MED13, CCNC and CDK8 subunits form a distinct module termed the CDK8 module. Mediator containing the CDK8 module is less active than Mediator lacking this module in supporting transcriptional activation. Individual preparations of the Mediator complex lacking one or more distinct subunits have been variously termed ARC, CRSP, DRIP, PC2, SMCC and TRAP. Interacts with STAT2. As to expression, ubiquitous.

It is found in the nucleus. In terms of biological role, component of the Mediator complex, a coactivator involved in the regulated transcription of nearly all RNA polymerase II-dependent genes. Mediator functions as a bridge to convey information from gene-specific regulatory proteins to the basal RNA polymerase II transcription machinery. Mediator is recruited to promoters by direct interactions with regulatory proteins and serves as a scaffold for the assembly of a functional preinitiation complex with RNA polymerase II and the general transcription factors. In Homo sapiens (Human), this protein is Mediator of RNA polymerase II transcription subunit 17 (MED17).